The following is a 200-amino-acid chain: Snake venom metalloproteinase hemorrhagic factor 2 (200 aa).

In terms of domain architecture, Peptidase M12B spans 4 to 200; that stretch reads KYIELVVVAD…RKPQCILNKP (197 aa). Residue Glu7 coordinates Ca(2+). Asn70 is a glycosylation site (N-linked (GlcNAc...) asparagine). Asp91 provides a ligand contact to Ca(2+). 3 cysteine pairs are disulfide-bonded: Cys115/Cys195, Cys155/Cys179, and Cys157/Cys162. Residue His140 coordinates Zn(2+). The active site involves Glu141. 2 residues coordinate Zn(2+): His144 and His150. Ca(2+) is bound by residues Cys195 and Asn198.

The protein belongs to the venom metalloproteinase (M12B) family. P-I subfamily. Monomer. Zn(2+) is required as a cofactor. In terms of tissue distribution, expressed by the venom gland.

It is found in the secreted. Its function is as follows. Snake venom zinc metalloproteinase that induces weak hemorrhage and mild myonecrosis. Shows mild myotoxicity by killing myocytes. Also induces edema in the mouse footpad at doses where hemorrhage is absent. In vitro, degrades laminin, fibronectin, and type IV collagen, suggesting this toxin play a role in local tissue damage by degrading extracellular matrix, and possibly by degrading muscle extracellular matrix. Hemorrhage is not due to cytotoxicity towards endothelial cells in culture, and may only play a minor role in local bleeding characteristic of L.muta envenomations. Also induces the synthesis of several endogenous matrix metalloproteinases, which in turn, may participate in extracellular matrix degradation. This Lachesis muta muta (Bushmaster) protein is Snake venom metalloproteinase hemorrhagic factor 2.